The primary structure comprises 521 residues: Protein NRT1/ PTR FAMILY 4.2 (521 aa).

12 consecutive transmembrane segments (helical) span residues 30 to 50, 65 to 85, 89 to 109, 133 to 153, 172 to 192, 204 to 224, 297 to 317, 338 to 358, 381 to 401, 413 to 433, 451 to 471, and 498 to 518; these read IVCV…FNFV, ANMV…GGFI, FVTH…GLIL, AILF…KASL, FFDW…TVVL, FNIS…GLPF, FLGL…VAQL, IPVP…IPLY, IGLG…VEAK, ISVL…MLTL, ISTA…TTLV, and LFYV…IFWA.

The protein belongs to the major facilitator superfamily. Proton-dependent oligopeptide transporter (POT/PTR) (TC 2.A.17) family. Expressed in siliques.

The protein localises to the membrane. Functionally, involved in abscisic acid transport. In Arabidopsis thaliana (Mouse-ear cress), this protein is Protein NRT1/ PTR FAMILY 4.2 (NPF4.2).